The chain runs to 549 residues: Glucose-6-phosphate isomerase (549 aa).

Glutamate 355 (proton donor) is an active-site residue. Catalysis depends on residues histidine 387 and lysine 515.

This sequence belongs to the GPI family.

The protein localises to the cytoplasm. The enzyme catalyses alpha-D-glucose 6-phosphate = beta-D-fructose 6-phosphate. It participates in carbohydrate biosynthesis; gluconeogenesis. It functions in the pathway carbohydrate degradation; glycolysis; D-glyceraldehyde 3-phosphate and glycerone phosphate from D-glucose: step 2/4. Its function is as follows. Catalyzes the reversible isomerization of glucose-6-phosphate to fructose-6-phosphate. The sequence is that of Glucose-6-phosphate isomerase from Histophilus somni (strain 2336) (Haemophilus somnus).